The following is a 79-amino-acid chain: Delta-hormotoxin-Cpt1b (79 aa).

Positions 1 to 20 (MKTQVLALFVLCVLFCLAES) are cleaved as a signal peptide. A propeptide spanning residues 21–31 (RTTLNKRNDIE) is cleaved from the precursor. Intrachain disulfides connect Cys36-Cys75, Cys38-Cys66, and Cys56-Cys76.

This sequence belongs to the sea anemone sodium channel inhibitory toxin family.

The protein localises to the secreted. Its subcellular location is the nematocyst. In neuromuscular preparation of crustaceans, the toxin increased neurotransmitter release, causing repetitive firing of the axons. May affect sodium channels (Nav). In Calliactis parasitica (Sea anemone), this protein is Delta-hormotoxin-Cpt1b.